The chain runs to 88 residues: MMTKTGLVLLFAFLLVFPVSSLPMDAEAGHARLEMDKRDAGNEAWTRLLKRYEENCGTEYCTSKIGCPGRCVCKEYNYNGEITRRCRA.

The signal sequence occupies residues Met1–Ser21. A propeptide spanning residues Leu22–Leu49 is cleaved from the precursor. Disulfide bonds link Cys56/Cys71, Cys61/Cys73, and Cys67/Cys86.

In terms of tissue distribution, expressed by the venom duct.

It localises to the secreted. In Hastula hectica (Sea snail), this protein is Augerpeptide Hhe9a.